The primary structure comprises 89 residues: NADH-ubiquinone oxidoreductase chain 4L (89 aa).

Helical transmembrane passes span 1-21 (MSLT…NRKN), 22-42 (IILM…LILV), and 57-77 (IYII…LVAF).

This sequence belongs to the complex I subunit 4L family.

The protein resides in the mitochondrion membrane. The enzyme catalyses a ubiquinone + NADH + 5 H(+)(in) = a ubiquinol + NAD(+) + 4 H(+)(out). In terms of biological role, core subunit of the mitochondrial membrane respiratory chain NADH dehydrogenase (Complex I) that is believed to belong to the minimal assembly required for catalysis. Complex I functions in the transfer of electrons from NADH to the respiratory chain. The immediate electron acceptor for the enzyme is believed to be ubiquinone. The chain is NADH-ubiquinone oxidoreductase chain 4L (ND4L) from Hypocrea jecorina (Trichoderma reesei).